A 419-amino-acid chain; its full sequence is Serine hydroxymethyltransferase (419 aa).

Residues leucine 121 and 125–127 contribute to the (6S)-5,6,7,8-tetrahydrofolate site; that span reads GHL. N6-(pyridoxal phosphate)lysine is present on lysine 229.

Belongs to the SHMT family. As to quaternary structure, homodimer. Pyridoxal 5'-phosphate serves as cofactor.

The protein resides in the cytoplasm. The enzyme catalyses (6R)-5,10-methylene-5,6,7,8-tetrahydrofolate + glycine + H2O = (6S)-5,6,7,8-tetrahydrofolate + L-serine. Its pathway is one-carbon metabolism; tetrahydrofolate interconversion. The protein operates within amino-acid biosynthesis; glycine biosynthesis; glycine from L-serine: step 1/1. Functionally, catalyzes the reversible interconversion of serine and glycine with tetrahydrofolate (THF) serving as the one-carbon carrier. This reaction serves as the major source of one-carbon groups required for the biosynthesis of purines, thymidylate, methionine, and other important biomolecules. Also exhibits THF-independent aldolase activity toward beta-hydroxyamino acids, producing glycine and aldehydes, via a retro-aldol mechanism. This is Serine hydroxymethyltransferase from Streptomyces griseus subsp. griseus (strain JCM 4626 / CBS 651.72 / NBRC 13350 / KCC S-0626 / ISP 5235).